A 464-amino-acid polypeptide reads, in one-letter code: tRNA-2-methylthio-N(6)-dimethylallyladenosine synthase (464 aa).

The region spanning 19–135 is the MTTase N-terminal domain; sequence GSYWITTFGC…LENLLERVDS (117 aa). Residues Cys-28, Cys-64, Cys-98, Cys-170, Cys-174, and Cys-177 each coordinate [4Fe-4S] cluster. The Radical SAM core domain occupies 156 to 393; that stretch reads RDSTICGWVN…NELVEATSRK (238 aa). The 69-residue stretch at 396–464 folds into the TRAM domain; sequence QRYLNNTESV…SFSLSGQIYK (69 aa).

The protein belongs to the methylthiotransferase family. MiaB subfamily. As to quaternary structure, monomer. [4Fe-4S] cluster is required as a cofactor.

Its subcellular location is the cytoplasm. The enzyme catalyses N(6)-dimethylallyladenosine(37) in tRNA + (sulfur carrier)-SH + AH2 + 2 S-adenosyl-L-methionine = 2-methylsulfanyl-N(6)-dimethylallyladenosine(37) in tRNA + (sulfur carrier)-H + 5'-deoxyadenosine + L-methionine + A + S-adenosyl-L-homocysteine + 2 H(+). In terms of biological role, catalyzes the methylthiolation of N6-(dimethylallyl)adenosine (i(6)A), leading to the formation of 2-methylthio-N6-(dimethylallyl)adenosine (ms(2)i(6)A) at position 37 in tRNAs that read codons beginning with uridine. In Prochlorococcus marinus (strain MIT 9515), this protein is tRNA-2-methylthio-N(6)-dimethylallyladenosine synthase.